The primary structure comprises 334 residues: uncharacterized protein (334 aa).

Belongs to the PAPS reductase family.

This is an uncharacterized protein from Escherichia phage 186 (Bacteriophage 186).